The primary structure comprises 452 residues: Peptidase M20 domain-containing protein SMAC_03666.2 (452 aa).

An N-terminal signal peptide occupies residues 1 to 28; it reads MKATSNLLLLWGTSLLSPSSAFVIDNHH. An N-linked (GlcNAc...) asparagine glycan is attached at asparagine 140. Residue aspartate 186 participates in Zn(2+) binding. Glutamate 220 (proton acceptor) is an active-site residue. Glutamate 221 contributes to the Zn(2+) binding site. Asparagine 315 carries N-linked (GlcNAc...) asparagine glycosylation.

Belongs to the peptidase M20A family. It depends on Zn(2+) as a cofactor.

Its subcellular location is the secreted. The chain is Peptidase M20 domain-containing protein SMAC_03666.2 from Sordaria macrospora (strain ATCC MYA-333 / DSM 997 / K(L3346) / K-hell).